The following is a 374-amino-acid chain: Pectate lyase 3 (374 aa).

Positions 1–22 (MKYLLPSAAAGLLLLAAQPTMA) are cleaved as a signal peptide. A disulfide bridge connects residues cysteine 93 and cysteine 176. Ca(2+)-binding residues include aspartate 150, aspartate 152, glutamate 187, and aspartate 191. Arginine 239 is a catalytic residue. Cysteine 350 and cysteine 373 are oxidised to a cystine.

It belongs to the polysaccharide lyase 1 family. PLADES subfamily. The cofactor is Ca(2+).

It is found in the secreted. The catalysed reaction is Eliminative cleavage of (1-&gt;4)-alpha-D-galacturonan to give oligosaccharides with 4-deoxy-alpha-D-galact-4-enuronosyl groups at their non-reducing ends.. It functions in the pathway glycan metabolism; pectin degradation; 2-dehydro-3-deoxy-D-gluconate from pectin: step 2/5. Involved in maceration and soft-rotting of plant tissue. The polypeptide is Pectate lyase 3 (pel3) (Pectobacterium carotovorum (Erwinia carotovora)).